The chain runs to 280 residues: Proteasome subunit beta (280 aa).

Positions 1 to 53 are cleaved as a propeptide — removed in mature form; by autocatalysis; sequence MSEYSAGRSGFSPAYLDRVGSSFTDFLAAAAPHLLPGSRPVPQIPVGNVTPHG. Thr54 acts as the Nucleophile in catalysis.

The protein belongs to the peptidase T1B family. In terms of assembly, the 20S proteasome core is composed of 14 alpha and 14 beta subunits that assemble into four stacked heptameric rings, resulting in a barrel-shaped structure. The two inner rings, each composed of seven catalytic beta subunits, are sandwiched by two outer rings, each composed of seven alpha subunits. The catalytic chamber with the active sites is on the inside of the barrel. Has a gated structure, the ends of the cylinder being occluded by the N-termini of the alpha-subunits. Is capped by the proteasome-associated ATPase, ARC.

It localises to the cytoplasm. The enzyme catalyses Cleavage of peptide bonds with very broad specificity.. It functions in the pathway protein degradation; proteasomal Pup-dependent pathway. With respect to regulation, the formation of the proteasomal ATPase ARC-20S proteasome complex, likely via the docking of the C-termini of ARC into the intersubunit pockets in the alpha-rings, may trigger opening of the gate for substrate entry. Interconversion between the open-gate and close-gate conformations leads to a dynamic regulation of the 20S proteasome proteolysis activity. In terms of biological role, component of the proteasome core, a large protease complex with broad specificity involved in protein degradation. The sequence is that of Proteasome subunit beta from Geodermatophilus obscurus (strain ATCC 25078 / DSM 43160 / JCM 3152 / CCUG 61914 / KCC A-0152 / KCTC 9177 / NBRC 13315 / NRRL B-3577 / G-20).